Consider the following 230-residue polypeptide: Small ribosomal subunit protein uS3 (230 aa).

In terms of domain architecture, KH type-2 spans 39 to 107 (VREYLFKRLK…PVHINIEEVR (69 aa)).

It belongs to the universal ribosomal protein uS3 family. As to quaternary structure, part of the 30S ribosomal subunit. Forms a tight complex with proteins S10 and S14.

In terms of biological role, binds the lower part of the 30S subunit head. Binds mRNA in the 70S ribosome, positioning it for translation. The polypeptide is Small ribosomal subunit protein uS3 (Alcanivorax borkumensis (strain ATCC 700651 / DSM 11573 / NCIMB 13689 / SK2)).